A 310-amino-acid chain; its full sequence is Tyrosine recombinase XerC (310 aa).

In terms of domain architecture, Core-binding (CB) spans 11–97; it reads NSLQKPLERF…SLRSFFDFLI (87 aa). A Tyr recombinase domain is found at 118–298; sequence PLPKNLDVDE…DFQHLAQAYD (181 aa). Catalysis depends on residues arginine 157, lysine 181, histidine 250, arginine 253, and histidine 276. Tyrosine 285 serves as the catalytic O-(3'-phospho-DNA)-tyrosine intermediate.

It belongs to the 'phage' integrase family. XerC subfamily. As to quaternary structure, forms a cyclic heterotetrameric complex composed of two molecules of XerC and two molecules of XerD.

The protein localises to the cytoplasm. Site-specific tyrosine recombinase, which acts by catalyzing the cutting and rejoining of the recombining DNA molecules. The XerC-XerD complex is essential to convert dimers of the bacterial chromosome into monomers to permit their segregation at cell division. It also contributes to the segregational stability of plasmids. This is Tyrosine recombinase XerC from Vibrio parahaemolyticus serotype O3:K6 (strain RIMD 2210633).